Consider the following 769-residue polypeptide: Phosphoribosylformylglycinamidine synthase subunit PurL (769 aa).

A compositionally biased stretch (polar residues) spans 1 to 13 (MTGTPSAPTTSPD). Positions 1 to 30 (MTGTPSAPTTSPDDQADGPGEGTVDRQPYR) are disordered. H65 is an active-site residue. 2 residues coordinate ATP: Y68 and K109. Residue E111 participates in Mg(2+) binding. Substrate-binding positions include 112–115 (SHNH) and R134. H113 functions as the Proton acceptor in the catalytic mechanism. Position 135 (D135) interacts with Mg(2+). Q260 is a binding site for substrate. D288 lines the Mg(2+) pocket. 337-339 (ESQ) contributes to the substrate binding site. 2 residues coordinate ATP: N524 and G561. N562 serves as a coordination point for Mg(2+). S564 lines the substrate pocket.

This sequence belongs to the FGAMS family. In terms of assembly, monomer. Part of the FGAM synthase complex composed of 1 PurL, 1 PurQ and 2 PurS subunits.

Its subcellular location is the cytoplasm. It catalyses the reaction N(2)-formyl-N(1)-(5-phospho-beta-D-ribosyl)glycinamide + L-glutamine + ATP + H2O = 2-formamido-N(1)-(5-O-phospho-beta-D-ribosyl)acetamidine + L-glutamate + ADP + phosphate + H(+). The protein operates within purine metabolism; IMP biosynthesis via de novo pathway; 5-amino-1-(5-phospho-D-ribosyl)imidazole from N(2)-formyl-N(1)-(5-phospho-D-ribosyl)glycinamide: step 1/2. In terms of biological role, part of the phosphoribosylformylglycinamidine synthase complex involved in the purines biosynthetic pathway. Catalyzes the ATP-dependent conversion of formylglycinamide ribonucleotide (FGAR) and glutamine to yield formylglycinamidine ribonucleotide (FGAM) and glutamate. The FGAM synthase complex is composed of three subunits. PurQ produces an ammonia molecule by converting glutamine to glutamate. PurL transfers the ammonia molecule to FGAR to form FGAM in an ATP-dependent manner. PurS interacts with PurQ and PurL and is thought to assist in the transfer of the ammonia molecule from PurQ to PurL. The chain is Phosphoribosylformylglycinamidine synthase subunit PurL from Parafrankia sp. (strain EAN1pec).